Consider the following 520-residue polypeptide: Succinyl-CoA:3-ketoacid coenzyme A transferase 2A, mitochondrial (520 aa).

Residues 1–39 constitute a mitochondrion transit peptide; the sequence is MAALRLLAWALPRGVSALRPPPALPHRLIRRYVSDRSGS. The segment at 280–299 is disordered; the sequence is ERLTTRDSKPAPGSKDNDPS. The active-site 5-glutamyl coenzyme A thioester intermediate is Glu342.

Belongs to the 3-oxoacid CoA-transferase family. In terms of assembly, homodimer.

It localises to the mitochondrion. The enzyme catalyses a 3-oxo acid + succinyl-CoA = a 3-oxoacyl-CoA + succinate. It participates in ketone metabolism; succinyl-CoA degradation; acetoacetyl-CoA from succinyl-CoA: step 1/1. In terms of biological role, key enzyme for ketone body catabolism. Transfers the CoA moiety from succinate to acetoacetate. Formation of the enzyme-CoA intermediate proceeds via an unstable anhydride species formed between the carboxylate groups of the enzyme and substrate. Probably play and important roles in the energy metabolism of spermatozoa. The protein is Succinyl-CoA:3-ketoacid coenzyme A transferase 2A, mitochondrial (Oxct2a) of Mus musculus (Mouse).